Consider the following 432-residue polypeptide: Asparagine--tRNA ligase (432 aa).

Belongs to the class-II aminoacyl-tRNA synthetase family. In terms of assembly, homodimer.

It is found in the cytoplasm. It catalyses the reaction tRNA(Asn) + L-asparagine + ATP = L-asparaginyl-tRNA(Asn) + AMP + diphosphate + H(+). The sequence is that of Asparagine--tRNA ligase from Lactobacillus delbrueckii subsp. bulgaricus (strain ATCC 11842 / DSM 20081 / BCRC 10696 / JCM 1002 / NBRC 13953 / NCIMB 11778 / NCTC 12712 / WDCM 00102 / Lb 14).